Here is a 121-residue protein sequence, read N- to C-terminus: Amelogenin (121 aa).

The interval 1 to 121 (LHHQIIPVLS…DLPLEPWPAS (121 aa)) is disordered. Polar residues-rich tracts occupy residues 10-19 (SQHQTPTHAL) and 47-59 (HSVTPTQHHQSNL). Residues 60–84 (PQPGQQPFQPQFPQKPTHRPIQPQA) show a composition bias toward low complexity. Residues 85-121 (PVHPMPPMPQPQLPPMFPLQPLPPLLPDLPLEPWPAS) show a composition bias toward pro residues.

Belongs to the amelogenin family.

The protein resides in the secreted. It localises to the extracellular space. Its subcellular location is the extracellular matrix. Plays a role in the biomineralization of teeth. Seems to regulate the formation of crystallites during the secretory stage of tooth enamel development. Thought to play a major role in the structural organization and mineralization of developing enamel. In Tachyglossus aculeatus aculeatus (Southeast Australian short-beaked echidna), this protein is Amelogenin (AMEL).